We begin with the raw amino-acid sequence, 89 residues long: Cell division topological specificity factor (89 aa).

The protein belongs to the MinE family.

Its function is as follows. Prevents the cell division inhibition by proteins MinC and MinD at internal division sites while permitting inhibition at polar sites. This ensures cell division at the proper site by restricting the formation of a division septum at the midpoint of the long axis of the cell. The sequence is that of Cell division topological specificity factor from Laribacter hongkongensis (strain HLHK9).